The sequence spans 190 residues: MNILTLILSYLIGSISFALIVGKMFYKKDIRDYGSGNLGATNAYRVLGIKAGVIVAIADILKGTFACLLPLILSSTINPIVCGLLAILGHIFSVFASFKGGKAVATATGVFLFLSPLGVLVGFVVFVLTLLFTKYVSLSSMLAGIALFIYSLIFEDKVIIALSLLIIVSIIILHRQNIKRILNGTENKIV.

The next 5 membrane-spanning stretches (helical) occupy residues 1 to 21 (MNIL…ALIV), 53 to 73 (VIVA…PLIL), 76 to 96 (TINP…SVFA), 110 to 130 (VFLF…VLTL), and 152 to 172 (LIFE…SIII).

This sequence belongs to the PlsY family. As to quaternary structure, probably interacts with PlsX.

Its subcellular location is the cell membrane. It catalyses the reaction an acyl phosphate + sn-glycerol 3-phosphate = a 1-acyl-sn-glycero-3-phosphate + phosphate. It participates in lipid metabolism; phospholipid metabolism. Functionally, catalyzes the transfer of an acyl group from acyl-phosphate (acyl-PO(4)) to glycerol-3-phosphate (G3P) to form lysophosphatidic acid (LPA). This enzyme utilizes acyl-phosphate as fatty acyl donor, but not acyl-CoA or acyl-ACP. The chain is Glycerol-3-phosphate acyltransferase 2 from Bacillus anthracis.